Reading from the N-terminus, the 244-residue chain is DNA polymerase sliding clamp (244 aa).

The protein belongs to the PCNA family. Homotrimer. The subunits circularize to form a toroid; DNA passes through its center. Replication factor C (RFC) is required to load the toroid on the DNA.

Its function is as follows. Sliding clamp subunit that acts as a moving platform for DNA processing. Responsible for tethering the catalytic subunit of DNA polymerase to DNA during high-speed replication. In conjunction with replication factor C (RFC) stimulates DNA synthesis by PolB, relieving inhibition by replication protein A (RPA). In Methanothermobacter thermautotrophicus (strain ATCC 29096 / DSM 1053 / JCM 10044 / NBRC 100330 / Delta H) (Methanobacterium thermoautotrophicum), this protein is DNA polymerase sliding clamp.